The chain runs to 93 residues: UPF0358 protein LMHCC_1561 (93 aa).

Belongs to the UPF0358 family.

This chain is UPF0358 protein LMHCC_1561, found in Listeria monocytogenes serotype 4a (strain HCC23).